The chain runs to 71 residues: Biotinylated protein TB7.3 homolog (71 aa).

Residues 2 to 71 (AEDVRAEIVA…QAGDLIAVIS (70 aa)) form the Biotinyl-binding domain. An N6-biotinyllysine modification is found at Lys-37.

The polypeptide is Biotinylated protein TB7.3 homolog (Mycobacterium leprae (strain TN)).